We begin with the raw amino-acid sequence, 116 residues long: Large ribosomal subunit protein bL17 (116 aa).

Belongs to the bacterial ribosomal protein bL17 family. Part of the 50S ribosomal subunit. Contacts protein L32.

This is Large ribosomal subunit protein bL17 from Gloeothece citriformis (strain PCC 7424) (Cyanothece sp. (strain PCC 7424)).